We begin with the raw amino-acid sequence, 149 residues long: Large ribosomal subunit protein bL9 (149 aa).

It belongs to the bacterial ribosomal protein bL9 family.

Binds to the 23S rRNA. This Helicobacter pylori (strain J99 / ATCC 700824) (Campylobacter pylori J99) protein is Large ribosomal subunit protein bL9.